The following is a 406-amino-acid chain: MVHCAGCKRPILDRFLLNVLDRAWHVKCVQCCECKCNLTEKCFSREGKLYCKNDFFRCFGTKCAGCAQGISPSDLVRRARSKVFHLNCFTCMMCNKQLSTGEELYIIDENKFVCKEDYLNNSNTAKENSLHSATTGSDPSLSPDSQDPSQDDAKDSESANVSDKETGSNENDDQNLGAKRRGPRTTIKAKQLETLKAAFAATPKPTRHIREQLAQETGLNMRVIQVWFQNRRSKERRMKQLSALGARRHAFFRSPRRMRPLVDRLEPGELLPNGPFSFYGDYQSEYYGPGANYEFFPQGPPSSQAQTPVELPFGAAGGPPGTPLGALEHPLPGHHPPGEAQRFPDMLAHPAGDSPSPEPTLPGSLHSMSAEVFGPSPPFSSISVNGGANYGNHLSHPPEMNEAAVW.

2 LIM zinc-binding domains span residues 4–54 (CAGC…CKND) and 63–117 (CAGC…CKED). Residues 125-136 (AKENSLHSATTG) show a composition bias toward polar residues. 2 disordered regions span residues 125–187 (AKEN…RTTI) and 296–372 (FPQG…SAEV). A compositionally biased stretch (low complexity) spans 137-148 (SDPSLSPDSQDP). Residues 151–167 (DDAKDSESANVSDKETG) are compositionally biased toward basic and acidic residues. The homeobox DNA-binding region spans 180–239 (RRGPRTTIKAKQLETLKAAFAATPKPTRHIREQLAQETGLNMRVIQVWFQNRRSKERRMK).

The protein resides in the nucleus. Functionally, transcriptional factor that defines subclasses of motoneurons that segregate into columns in the spinal cord and select distinct axon pathways. Acts in conjunction with ISL-2. This Gallus gallus (Chicken) protein is LIM/homeobox protein Lhx1 (LHX1).